The primary structure comprises 234 residues: Triggering receptor expressed on myeloid cells 1 (234 aa).

Residues 1-20 (MRKTRLWGLLWMLFVSELRA) form the signal peptide. Residues 21–205 (ATKLTEEKYE…TDIIRVPVFN (185 aa)) are Extracellular-facing. Positions 26-134 (EEKYELKEGQ…LFDRIRLVVT (109 aa)) constitute an Ig-like V-type domain. The cysteines at positions 41 and 113 are disulfide-linked. 3 N-linked (GlcNAc...) asparagine glycosylation sites follow: N146, N191, and N194. Residues 206–226 (IVILLAGGFLSKSLVFSVLFA) traverse the membrane as a helical segment. The Cytoplasmic segment spans residues 227-234 (VTLRSFVP).

As to quaternary structure, monomer. Homomultimer; when activated. Interacts with TYROBP/DAP12. Interacts with TLR4. In terms of processing, glycosylated. Mostly expressed by immune cells of the myeloid lineage, such as monocytes, macrophages, neutrophils and dendritic cells. Expression is associated with a mature stage of myeloid development. Highly expressed in adult liver, lung and spleen than in corresponding fetal tissue. Also expressed in the lymph node, placenta, spinal cord and heart tissues. Isoform 2 was detected in the lung, liver and mature monocytes.

The protein localises to the cell membrane. It localises to the secreted. Functionally, cell surface receptor that plays important roles in innate and adaptive immunity by amplifying inflammatory responses. Upon activation by various ligands such as PGLYRP1, HMGB1 or HSP70, multimerizes and forms a complex with transmembrane adapter TYROBP/DAP12. In turn, initiates a SYK-mediated cascade of tyrosine phosphorylation, activating multiple downstream mediators such as BTK, MAPK1, MAPK3 or phospholipase C-gamma. This cascade promotes the neutrophil- and macrophage-mediated release of pro-inflammatory cytokines and/or chemokines, as well as their migration and thereby amplifies inflammatory responses that are triggered by bacterial and fungal infections. By also promoting the amplification of inflammatory signals that are initially triggered by Toll-like receptor (TLR) and NOD-like receptor engagement, plays a major role in the pathophysiology of acute and chronic inflammatory diseases of different etiologies including septic shock and atherosclerosis. In terms of biological role, acts as a decoy receptor, counterbalancing TREM1 pro-inflammatory activity through the neutralization of its ligand. This Homo sapiens (Human) protein is Triggering receptor expressed on myeloid cells 1 (TREM1).